A 92-amino-acid chain; its full sequence is Kinetoplastid membrane protein 11B (92 aa).

This sequence belongs to the KMP-11 family. In terms of assembly, monomer.

It is found in the cytoplasm. It localises to the cytoskeleton. Its subcellular location is the cell projection. The protein resides in the cilium. The protein localises to the flagellum. Functionally, may be involved in the regulation of the cytoskeleton through interaction with the subpellicular microtubules. May be involved in parasite mobility and attachment to the surface of the host cell. Behaves as a strong immunogen during infection. This is Kinetoplastid membrane protein 11B (KMP-11B) from Leishmania infantum.